The chain runs to 489 residues: Homoserine O-acetyltransferase (489 aa).

The AB hydrolase-1 domain occupies 47-354; that stretch reads NAILVCHALT…NYGHDSFLLE (308 aa). S152 serves as the catalytic Nucleophile. R221 serves as a coordination point for substrate. Residues D315 and H348 contribute to the active site. Residue D349 participates in substrate binding. 2 consecutive CBS domains span residues 375–434 and 436–489; these read MIED…NLEE and MTKN…IEEF.

The protein belongs to the AB hydrolase superfamily. MetX family. Homodimer.

Its subcellular location is the cytoplasm. It carries out the reaction L-homoserine + acetyl-CoA = O-acetyl-L-homoserine + CoA. It functions in the pathway amino-acid biosynthesis; L-methionine biosynthesis via de novo pathway; O-acetyl-L-homoserine from L-homoserine: step 1/1. Transfers an acetyl group from acetyl-CoA to L-homoserine, forming acetyl-L-homoserine. This chain is Homoserine O-acetyltransferase, found in Methanohalobium evestigatum (strain ATCC BAA-1072 / DSM 3721 / NBRC 107634 / OCM 161 / Z-7303).